The primary structure comprises 196 residues: DnaA initiator-associating protein DiaA (196 aa).

The SIS domain maps to 34–196; it reads VVQSLLNGNK…DNTLFPHQEV (163 aa).

The protein belongs to the SIS family. DiaA subfamily. Homotetramer; dimer of dimers.

Its function is as follows. Required for the timely initiation of chromosomal replication via direct interactions with the DnaA initiator protein. The polypeptide is DnaA initiator-associating protein DiaA (Erwinia tasmaniensis (strain DSM 17950 / CFBP 7177 / CIP 109463 / NCPPB 4357 / Et1/99)).